Reading from the N-terminus, the 343-residue chain is N-acetyl-gamma-glutamyl-phosphate reductase (343 aa).

The active site involves Cys147.

The protein belongs to the NAGSA dehydrogenase family. Type 1 subfamily.

Its subcellular location is the cytoplasm. It carries out the reaction N-acetyl-L-glutamate 5-semialdehyde + phosphate + NADP(+) = N-acetyl-L-glutamyl 5-phosphate + NADPH + H(+). It participates in amino-acid biosynthesis; L-arginine biosynthesis; N(2)-acetyl-L-ornithine from L-glutamate: step 3/4. Its function is as follows. Catalyzes the NADPH-dependent reduction of N-acetyl-5-glutamyl phosphate to yield N-acetyl-L-glutamate 5-semialdehyde. This chain is N-acetyl-gamma-glutamyl-phosphate reductase, found in Listeria monocytogenes serotype 4a (strain HCC23).